A 450-amino-acid chain; its full sequence is Tubulin alpha-2 chain (450 aa).

Gln11 contacts GTP. Position 40 is an N6-acetyllysine (Lys40). Glu71, Gly144, Thr145, Thr179, Asn206, and Asn228 together coordinate GTP. Glu71 is a Mg(2+) binding site. Glu254 is a catalytic residue.

It belongs to the tubulin family. Dimer of alpha and beta chains. A typical microtubule is a hollow water-filled tube with an outer diameter of 25 nm and an inner diameter of 15 nM. Alpha-beta heterodimers associate head-to-tail to form protofilaments running lengthwise along the microtubule wall with the beta-tubulin subunit facing the microtubule plus end conferring a structural polarity. Microtubules usually have 13 protofilaments but different protofilament numbers can be found in some organisms and specialized cells. The cofactor is Mg(2+). Undergoes a tyrosination/detyrosination cycle, the cyclic removal and re-addition of a C-terminal tyrosine residue by the enzymes tubulin tyrosine carboxypeptidase (TTCP) and tubulin tyrosine ligase (TTL), respectively. Post-translationally, acetylation of alpha chains at Lys-40 stabilizes microtubules and affects affinity and processivity of microtubule motors. This modification has a role in multiple cellular functions, ranging from cell motility, cell cycle progression or cell differentiation to intracellular trafficking and signaling.

The protein localises to the cytoplasm. It is found in the cytoskeleton. It carries out the reaction GTP + H2O = GDP + phosphate + H(+). In terms of biological role, tubulin is the major constituent of microtubules, a cylinder consisting of laterally associated linear protofilaments composed of alpha- and beta-tubulin heterodimers. Microtubules grow by the addition of GTP-tubulin dimers to the microtubule end, where a stabilizing cap forms. Below the cap, tubulin dimers are in GDP-bound state, owing to GTPase activity of alpha-tubulin. This chain is Tubulin alpha-2 chain, found in Gossypium hirsutum (Upland cotton).